A 362-amino-acid chain; its full sequence is Aminomethyltransferase (362 aa).

Belongs to the GcvT family. As to quaternary structure, the glycine cleavage system is composed of four proteins: P, T, L and H.

The enzyme catalyses N(6)-[(R)-S(8)-aminomethyldihydrolipoyl]-L-lysyl-[protein] + (6S)-5,6,7,8-tetrahydrofolate = N(6)-[(R)-dihydrolipoyl]-L-lysyl-[protein] + (6R)-5,10-methylene-5,6,7,8-tetrahydrofolate + NH4(+). The glycine cleavage system catalyzes the degradation of glycine. In Chlorobium limicola (strain DSM 245 / NBRC 103803 / 6330), this protein is Aminomethyltransferase.